The sequence spans 660 residues: MRPRAVLLLLFVLLPMLPAPPAGQPSGRRRGRRSGGAGGGFWGDRVDSQPFALPYIHPTNPFAADVVSQPGAGTRPRQPPRPLGSAWRDQSQRPSAAPRRRSAPAGAAPLTAVSPAPDTAPVPDVDSRGAILRRQYNLSTSPLTSSVASGTNLVLYAAPLNPLLPLQDGTNTHIMATEASNYAQYRVVRATIRYRPLVPNAVGGYAISISFWPQTTTTPTSVDMNSITSTDVRILVQPGIASELVIPSERLHYRNQGWRSVETTGVAEEEATSGLVMLCIHGSPVNSYTNTPYTGALGLLDFALELEFRNLTPGNTNTRVSRYTSTARHRLRRGADGTAELTTTAATRFMKDLHFAGTNGVGEVGRGIALTLFNLADTLLGGLPTELISSAGGQLFYSRPVVSANGEPTVKLYTSVENAQQDKGITIPHDIDLGDSRVVIQDYDNQHEQDRPTPSPAPSRPFSVLRANDVLWLSLTAAEYDQTTYGSSTNPMYVSDTVTLVNVATGAQAVARSLDWSKVTLDGRPLTTIQQYSKTFYVLPLRGKLSFWEAGTTKAGYPYNYNTTASDQILIENAAGHRVAISTYTTSLGAGPTSISAVGVLAPHSALAVLEDTIDYPARAHTFDDFCPECRTLGLQGCAFQSTIAELQRLKMKVGKTRES.

The signal sequence occupies residues 1 to 23 (MRPRAVLLLLFVLLPMLPAPPAG). Disordered stretches follow at residues 19 to 43 (APPAGQPSGRRRGRRSGGAGGGFWG) and 64 to 125 (ADVV…VPDV). A Nuclear localization signal motif is present at residues 28-33 (RRRGRR). A compositionally biased stretch (low complexity) spans 93–124 (RPSAAPRRRSAPAGAAPLTAVSPAPDTAPVPD). Asn137 and Asn310 each carry an N-linked (GlcNAc...) asparagine; by host glycan. The tract at residues 368 to 394 (IALTLFNLADTLLGGLPTELISSAGGQ) is particle formation. N-linked (GlcNAc...) asparagine; by host glycosylation occurs at Asn562. The interval 585 to 610 (TTSLGAGPTSISAVGVLAPHSALAVL) is oligomerization.

The protein belongs to the hepevirus capsid protein family. Homodimer. As to quaternary structure, self-assembles to form the capsid. The capsid is dominated by dimers that define the 30 morphological units. Interacts with phosphorylated protein ORF3. Interacts with host TMEM134. Interacts with host ASGR1 and ASGR2; these interactions facilitate infection of host hepatocytes. Post-translationally, cleaved by host protease in the N-terminus. N-glycosylated. In terms of processing, not N-glycosylated. The C-terminus of the capsid protein ORF2 is truncated in non-enveloped virions shedded in feces, probably due to host proteases.

The protein localises to the secreted. It is found in the virion. The protein resides in the host cytoplasm. It localises to the host endoplasmic reticulum. Its subcellular location is the host Golgi apparatus. The protein localises to the host cell surface. It is found in the host nucleus. Functionally, plays a role in the inhibition of host antibody-mediated neutralization without blocking viral cell entry. Forms an icosahedral capsid with a T=1 symmetry and a 34 nm diameter. The capsid is composed of 60 copies linked to each other. Binds to the 5' end of the genomic RNA to mediate genome encapsidation. Binds to heparin surface proteoglycans (HSPGs) to mediate viral entry. Additionally, the interactions with host ASGR1 and ASGR2 facilitate viral infection of hepatocytes. Inhibits IFN production by blocking host TBK1-induced IRF3 phosphorylation. The nuclear form probably modulates host gene expression. The sequence is that of Pro-secreted protein ORF2 from Hepatitis E virus genotype 3 (isolate Human/United States/US2) (HEV-3).